A 148-amino-acid chain; its full sequence is uncharacterized protein (148 aa).

The protein belongs to the SufE family.

This is an uncharacterized protein from Rhizobium etli (strain ATCC 51251 / DSM 11541 / JCM 21823 / NBRC 15573 / CFN 42).